The chain runs to 184 residues: Large ribosomal subunit protein uL22 (184 aa).

Residues 160–184 are disordered; it reads PEEEVAQKKKISQKKLKKQKLMARE. Residues 167 to 184 show a composition bias toward basic residues; that stretch reads KKKISQKKLKKQKLMARE.

It belongs to the universal ribosomal protein uL22 family. In terms of assembly, component of the large ribosomal subunit. Expressed in pancreas, lung, colon, cystic duct, gall bladder, kidney and liver. Expressed at high levels in the well differentiated pancreatic tumor cell lines HPAF, COLO 357 and Capan-1, the moderately differentiated pancreatic tumor cell lines T3M-4, AsPc-1 and BxPc-3, the poorly differentiated pancreatic tumor cell line MIA PaCa-2, and the pancreatic tumor cell lines of undefined differentiation status such as SW979. Expressed at lower levels in the poorly differentiated pancreatic tumor cell lines HCG-25 and PANC-1.

It localises to the cytoplasm. Its function is as follows. Component of the large ribosomal subunit. The ribosome is a large ribonucleoprotein complex responsible for the synthesis of proteins in the cell. This chain is Large ribosomal subunit protein uL22 (RPL17), found in Homo sapiens (Human).